An 878-amino-acid polypeptide reads, in one-letter code: Bifunctional heparan sulfate N-deacetylase/N-sulfotransferase 1 (878 aa).

Residues 1–17 (MSLSLKTRRFGRPVRPQ) are Cytoplasmic-facing. Residues 1 to 169 (MSLSLKTRRF…VEYGVGIIGF (169 aa)) are sufficient for localization to Golgi membrane. A helical; Signal-anchor for type II membrane protein membrane pass occupies residues 18–38 (LVLLLLFALCLLSVFISAYYL). Residues 39–878 (YGWKRGLEPS…WLREELQSTR (840 aa)) are Lumenal-facing. Residues 40 to 594 (GWKRGLEPSG…KRHKDIWSKE (555 aa)) form a heparan sulfate N-deacetylase 1 region. The interval 47–71 (PSGSEAQSPDCDEPKISPSRLLPMK) is disordered. 3 N-linked (GlcNAc...) asparagine glycosylation sites follow: Asn231, Asn347, and Asn397. The interval 595–878 (KTCDRFPKLL…WLREELQSTR (284 aa)) is heparan sulfate N-sulfotransferase 1. The For sulfotransferase activity role is filled by Lys610. Residue 610 to 614 (KTGTT) participates in adenosine 3',5'-bisphosphate binding. Asn663 carries an N-linked (GlcNAc...) asparagine glycan. Adenosine 3',5'-bisphosphate-binding residues include Ser708 and Trp813. Cysteines 814 and 824 form a disulfide. 829–833 (KGRKY) contacts adenosine 3',5'-bisphosphate.

The protein belongs to the sulfotransferase 1 family. NDST subfamily. Monomer.

Its subcellular location is the golgi apparatus membrane. The protein resides in the golgi apparatus. It localises to the trans-Golgi network membrane. The enzyme catalyses alpha-D-glucosaminyl-[heparan sulfate](n) + 3'-phosphoadenylyl sulfate = N-sulfo-alpha-D-glucosaminyl-[heparan sulfate](n) + adenosine 3',5'-bisphosphate + 2 H(+). It participates in glycan metabolism; heparan sulfate biosynthesis. The protein operates within glycan metabolism; heparin biosynthesis. Its function is as follows. Essential bifunctional enzyme that catalyzes both the N-deacetylation and the N-sulfation of glucosamine (GlcNAc) of the glycosaminoglycan in heparan sulfate. Modifies the GlcNAc-GlcA disaccharide repeating sugar backbone to make N-sulfated heparosan, a prerequisite substrate for later modifications in heparin biosynthesis. Plays a role in determining the extent and pattern of sulfation of heparan sulfate. The sequence is that of Bifunctional heparan sulfate N-deacetylase/N-sulfotransferase 1 (ndst1) from Xenopus tropicalis (Western clawed frog).